The following is a 177-amino-acid chain: Dual-action ribosomal maturation protein DarP (177 aa).

Over residues 1 to 12 the composition is skewed to basic and acidic residues; that stretch reads MKIVGDSEHFKQ. The tract at residues 1-26 is disordered; it reads MKIVGDSEHFKQPYDSNDEYVSKTED.

It belongs to the DarP family.

The protein resides in the cytoplasm. Functionally, member of a network of 50S ribosomal subunit biogenesis factors which assembles along the 30S-50S interface, preventing incorrect 23S rRNA structures from forming. Promotes peptidyl transferase center (PTC) maturation. This chain is Dual-action ribosomal maturation protein DarP, found in Shewanella oneidensis (strain ATCC 700550 / JCM 31522 / CIP 106686 / LMG 19005 / NCIMB 14063 / MR-1).